The following is a 96-amino-acid chain: Co-chaperonin GroES (96 aa).

Belongs to the GroES chaperonin family. As to quaternary structure, heptamer of 7 subunits arranged in a ring. Interacts with the chaperonin GroEL.

It localises to the cytoplasm. Its function is as follows. Together with the chaperonin GroEL, plays an essential role in assisting protein folding. The GroEL-GroES system forms a nano-cage that allows encapsulation of the non-native substrate proteins and provides a physical environment optimized to promote and accelerate protein folding. GroES binds to the apical surface of the GroEL ring, thereby capping the opening of the GroEL channel. This chain is Co-chaperonin GroES, found in Hydrogenovibrio crunogenus (strain DSM 25203 / XCL-2) (Thiomicrospira crunogena).